A 70-amino-acid polypeptide reads, in one-letter code: Flexible pilin (70 aa).

A signal peptide spans M1–A24.

As to quaternary structure, homomer.

Its subcellular location is the fimbrium. In terms of biological role, fimbriae (also called pili) are polar filaments radiating from the surface of the bacterium to a length of 0.5-1.5 micrometers and numbering 100-300 per cell. They enable bacteria to colonize the epithelium of specific host organs. Flexible pili possess hemagglutinating function. The chain is Flexible pilin (aerA) from Aeromonas hydrophila.